Here is a 589-residue protein sequence, read N- to C-terminus: Formate--tetrahydrofolate ligase (589 aa).

74-81 (TPFGEGKS) serves as a coordination point for ATP.

It belongs to the formate--tetrahydrofolate ligase family.

The enzyme catalyses (6S)-5,6,7,8-tetrahydrofolate + formate + ATP = (6R)-10-formyltetrahydrofolate + ADP + phosphate. Its pathway is one-carbon metabolism; tetrahydrofolate interconversion. This Thermodesulfovibrio yellowstonii (strain ATCC 51303 / DSM 11347 / YP87) protein is Formate--tetrahydrofolate ligase.